The primary structure comprises 292 residues: 5,10-methylenetetrahydrofolate reductase (292 aa).

Catalysis depends on glutamate 28, which acts as the Proton donor/acceptor. An NADH-binding site is contributed by threonine 59. Tyrosine 60, alanine 62, histidine 88, arginine 118, glycine 119, aspartate 120, alanine 132, tyrosine 152, histidine 156, aspartate 165, asparagine 168, lysine 171, and lysine 172 together coordinate FAD. Aspartate 120 lines the (6S)-5-methyl-5,6,7,8-tetrahydrofolate pocket. NADH is bound at residue glutamine 183. Glutamine 183 provides a ligand contact to (6S)-5-methyl-5,6,7,8-tetrahydrofolate.

The protein belongs to the methylenetetrahydrofolate reductase family. FAD serves as cofactor.

It catalyses the reaction (6S)-5-methyl-5,6,7,8-tetrahydrofolate + NAD(+) = (6R)-5,10-methylene-5,6,7,8-tetrahydrofolate + NADH + H(+). Its pathway is one-carbon metabolism; tetrahydrofolate interconversion. It participates in amino-acid biosynthesis; L-methionine biosynthesis via de novo pathway. Its function is as follows. Catalyzes the NADH-dependent reduction of 5,10-methylenetetrahydrofolate to 5-methyltetrahydrofolate. Is required to provide the methyl group necessary for methionine synthetase to convert homocysteine to methionine; the methyl group is given by 5-methyltetrahydrofolate. In Buchnera aphidicola subsp. Acyrthosiphon pisum (strain APS) (Acyrthosiphon pisum symbiotic bacterium), this protein is 5,10-methylenetetrahydrofolate reductase (metF).